A 213-amino-acid polypeptide reads, in one-letter code: Ras-related protein Rab-39B (213 aa).

Residues Ser-17, Gly-20, Lys-21, Ser-22, Cys-23, Ser-37, and Thr-40 each coordinate GTP. Mg(2+) is bound at residue Ser-22. Residues 35 to 43 (QVSDPTVGV) form a switch-I region. Mg(2+)-binding residues include Thr-40 and Asp-64. GTP contacts are provided by Gly-67, His-123, Lys-124, Asp-126, Ala-154, and Arg-155. The tract at residues 67–83 (GQERFRSITRAYYRNSV) is switch-II. Ser-201 is subject to Phosphoserine. S-geranylgeranyl cysteine attachment occurs at residues Cys-211 and Cys-213. Cys-213 is modified (cysteine methyl ester).

This sequence belongs to the small GTPase superfamily. Rab family. Interacts (GDP-bound) with C9orf72; C9orf72 in complex with SMCR8 acts as a GEF for RAB39B. Interacts (in GTP-bound form) with PICK1 (via PDZ domain); a PICK1 homodimer may allow simultaneous association of RAB39B and GRIA2 to PICK1 which is involved in GRIA2 trafficking. Interacts with isoform c of RASSF1; the interaction is strong. Interacts with isoform a of RASSF1; the interaction is weak. Interacts with the DLG4/PSD-95. Interacts (GTP-bound) with HOPS complex components VPS39 and VPS41. The cofactor is Mg(2+). Highly expressed in the brain.

It localises to the cell membrane. The protein resides in the cytoplasmic vesicle membrane. The protein localises to the golgi apparatus. Its subcellular location is the cytoplasmic vesicle. It is found in the autophagosome membrane. It localises to the autolysosome membrane. The enzyme catalyses GTP + H2O = GDP + phosphate + H(+). Regulated by guanine nucleotide exchange factors (GEFs) including C9orf72-SMCR8 complex, which promote the exchange of bound GDP for free GTP. Regulated by GTPase activating proteins (GAPs) which increase the GTP hydrolysis activity. Inhibited by GDP dissociation inhibitors (GDIs). In terms of biological role, the small GTPases Rab are key regulators of intracellular membrane trafficking, from the formation of transport vesicles to their fusion with membranes. Rabs cycle between an inactive GDP-bound form and an active GTP-bound form that is able to recruit to membranes different sets of downstream effectors directly responsible for vesicle formation, movement, tethering and fusion. RAB39B is involved in autophagy and may function in autophagosome formation. Binds downstream effector PICK1 to ensure selectively GRIA2 exit from the endoplasmic reticulum to the Golgi and to regulate AMPAR composition at the post-synapses and thus synaptic transmission. May regulate the homeostasis of SNCA/alpha-synuclein. The sequence is that of Ras-related protein Rab-39B from Homo sapiens (Human).